Reading from the N-terminus, the 155-residue chain is Large ribosomal subunit protein eL24B (155 aa).

S7 bears the Phosphoserine mark. The tract at residues 66–155 (EVAKKRSRKT…AFQKVAATSR (90 aa)) is disordered. Residues 89–129 (LIKERRSLKPEVRKANREEKLKANKEKKRAEKAARKAEKAK) show a composition bias toward basic and acidic residues.

Belongs to the eukaryotic ribosomal protein eL24 family. In terms of assembly, component of the large ribosomal subunit (LSU). Mature yeast ribosomes consist of a small (40S) and a large (60S) subunit. The 40S small subunit contains 1 molecule of ribosomal RNA (18S rRNA) and 33 different proteins (encoded by 57 genes). The large 60S subunit contains 3 rRNA molecules (25S, 5.8S and 5S rRNA) and 46 different proteins (encoded by 81 genes).

Its subcellular location is the cytoplasm. Functionally, component of the ribosome, a large ribonucleoprotein complex responsible for the synthesis of proteins in the cell. The small ribosomal subunit (SSU) binds messenger RNAs (mRNAs) and translates the encoded message by selecting cognate aminoacyl-transfer RNA (tRNA) molecules. The large subunit (LSU) contains the ribosomal catalytic site termed the peptidyl transferase center (PTC), which catalyzes the formation of peptide bonds, thereby polymerizing the amino acids delivered by tRNAs into a polypeptide chain. The nascent polypeptides leave the ribosome through a tunnel in the LSU and interact with protein factors that function in enzymatic processing, targeting, and the membrane insertion of nascent chains at the exit of the ribosomal tunnel. In Saccharomyces cerevisiae (strain ATCC 204508 / S288c) (Baker's yeast), this protein is Large ribosomal subunit protein eL24B.